A 103-amino-acid chain; its full sequence is Small ribosomal subunit protein uS10 (103 aa).

Belongs to the universal ribosomal protein uS10 family. Part of the 30S ribosomal subunit.

Its function is as follows. Involved in the binding of tRNA to the ribosomes. This is Small ribosomal subunit protein uS10 from Shewanella pealeana (strain ATCC 700345 / ANG-SQ1).